Here is a 515-residue protein sequence, read N- to C-terminus: Probable cytosol aminopeptidase (515 aa).

Mn(2+) is bound by residues K274 and D279. K286 is an active-site residue. D297, D356, and E358 together coordinate Mn(2+). R360 is a catalytic residue.

This sequence belongs to the peptidase M17 family. Requires Mn(2+) as cofactor.

The protein localises to the cytoplasm. It catalyses the reaction Release of an N-terminal amino acid, Xaa-|-Yaa-, in which Xaa is preferably Leu, but may be other amino acids including Pro although not Arg or Lys, and Yaa may be Pro. Amino acid amides and methyl esters are also readily hydrolyzed, but rates on arylamides are exceedingly low.. It carries out the reaction Release of an N-terminal amino acid, preferentially leucine, but not glutamic or aspartic acids.. In terms of biological role, presumably involved in the processing and regular turnover of intracellular proteins. Catalyzes the removal of unsubstituted N-terminal amino acids from various peptides. The polypeptide is Probable cytosol aminopeptidase (Desulforapulum autotrophicum (strain ATCC 43914 / DSM 3382 / VKM B-1955 / HRM2) (Desulfobacterium autotrophicum)).